Here is a 63-residue protein sequence, read N- to C-terminus: Conotoxin Lt11.1 (63 aa).

The signal sequence occupies residues 1–23; sequence MMFRLTSVLLVIVLLNLVVLTNA. Intrachain disulfides connect cysteine 24/cysteine 34, cysteine 28/cysteine 39, cysteine 33/cysteine 42, and cysteine 38/cysteine 47. Positions 53–63 are excised as a propeptide; sequence ALLQRLLGHQR.

This sequence belongs to the conotoxin I2 superfamily. In terms of tissue distribution, expressed by the venom duct.

The protein localises to the secreted. The sequence is that of Conotoxin Lt11.1 from Conus litteratus (Lettered cone).